A 301-amino-acid chain; its full sequence is Probable alpha-L-glutamate ligase (301 aa).

The region spanning leucine 104–glutamate 287 is the ATP-grasp domain. Residues lysine 141, glutamate 178 to tyrosine 179, aspartate 187, and arginine 211 to asparagine 213 contribute to the ATP site. Positions 248, 260, and 262 each coordinate Mg(2+). Mn(2+)-binding residues include aspartate 248, glutamate 260, and asparagine 262.

Belongs to the RimK family. It depends on Mg(2+) as a cofactor. The cofactor is Mn(2+).

The protein is Probable alpha-L-glutamate ligase of Pseudomonas fluorescens (strain Pf0-1).